Consider the following 606-residue polypeptide: Mitogen-activated protein kinase kinase kinase 7 (606 aa).

Positions 1 to 300 (MSTASAASSS…FPGADEPLQY (300 aa)) are interaction with MAPK8IP1. Residues 36–291 (IEVEEVVGRG…KIMTHLMRYF (256 aa)) form the Protein kinase domain. Residues 42–50 (VGRGAFGVV) and lysine 63 contribute to the ATP site. Residue lysine 72 forms a Glycyl lysine isopeptide (Lys-Gly) (interchain with G-Cter in ubiquitin) linkage. Catalysis depends on aspartate 156, which acts as the Proton acceptor. Lysine 158 is covalently cross-linked (Glycyl lysine isopeptide (Lys-Gly) (interchain with G-Cter in ubiquitin)). 2 positions are modified to (Microbial infection) O-acetylthreonine; by Yersinia YopJ; alternate: threonine 184 and threonine 187. 2 positions are modified to phosphothreonine; by autocatalysis; alternate: threonine 184 and threonine 187. The residue at position 192 (serine 192) is a Phosphoserine; by autocatalysis. Residue lysine 209 forms a Glycyl lysine isopeptide (Lys-Gly) (interchain with G-Cter in ubiquitin) linkage. The tract at residues 301–338 (PCQYSDEGQSNSATSTGSFMDIASTNTSNKSDTNMEQV) is disordered. The segment covering 306–338 (DEGQSNSATSTGSFMDIASTNTSNKSDTNMEQV) has biased composition (polar residues). Position 341 is a (Microbial infection) O-acetylthreonine; by Yersinia YopJ; alternate (threonine 341). Residues 354–391 (KNQAKQQSESGRLSLGASRGSSVESLPPTSEGKRMSAD) are disordered. The span at 361–375 (SESGRLSLGASRGSS) shows a compositional bias: low complexity. Phosphoserine occurs at positions 367, 389, and 439. Over residues 443–452 (LTVTGTEPGQ) the composition is skewed to polar residues. The disordered stretch occupies residues 443–493 (LTVTGTEPGQVSSRSSSPSVRMITTSGPTSEKPTRSHPWTPDDSTDTNGSD). 3 positions are modified to (Microbial infection) O-acetylthreonine; by Yersinia YopJ; alternate: threonine 444, threonine 446, and threonine 448. Over residues 453-463 (VSSRSSSPSVR) the composition is skewed to low complexity. A Phosphoserine modification is found at serine 455. Polar residues predominate over residues 464–473 (MITTSGPTSE). A (Microbial infection) O-acetylthreonine; by Yersinia YopJ; alternate modification is found at threonine 467.

This sequence belongs to the protein kinase superfamily. STE Ser/Thr protein kinase family. MAP kinase kinase kinase subfamily. In terms of assembly, can form homodimer. Binds both upstream activators and downstream substrates in multimolecular complexes. Interacts with TAB1/MAP3K7IP1, TAB2/MAP3K7IP2 and TAB3/MAP3K7IP3. Identified in the TRIKA2 complex composed of MAP3K7/TAK1, TAB1/MAP3K7IP1 and TAB2/MAP3K7IP2. Interacts with PPM1L and PPM1B/PP2CB. Interaction with PP2A and PPP6C leads to its repressed activity. Interacts with TRAF6 and TAB1/MAP3K7IP1; during IL-1 signaling. Interacts with TAOK1 and TAOK2; interaction with TAOK2 interferes with MAP3K7 interaction with IKKA, thus preventing NF-kappa-B activation. Interacts with DYNC2I2 (via WD domains). Interacts with CYLD and RBCK1. Interacts with TGFBR1; induces MAP3K7/TAK1 activation by TRAF6. Interacts with MAPK8IP1 and SMAD6. Interacts with isoform 1 of VRK2. Interacts with DAB2; the interaction is induced by TGF-beta stimulation and may mediate TGF-beta stimulated JNK activation. Interacts with TRIM5. Part of a complex containing ITCH, NDFIP1 and MAP3K7. Interacts with IFIT5; the interaction synergizes the recruitment of IKK to MAP3K7 and enhances IKK phosphorylation. Interacts with PLEKHM1 (via N- and C-terminus). Interacts with TRIM8. Found in a complex with SH3RF1, RAC2, MAP2K7/MKK7, MAPK8IP1/JIP1, MAPK8/JNK1 and MAPK9/JNK2. Interacts with SASH1. Interacts with RIPK1. As to quaternary structure, (Microbial infection) Interacts with herpes simplex virus 2 protein US2; this interaction induces MAP3K7 phosphorylation and subsequent activation. Requires Mg(2+) as cofactor. In terms of processing, association with TAB1/MAP3K7IP1 promotes autophosphorylation at Ser-192 and subsequent activation. Association with TAB2/MAP3K7IP2, itself associated with free unanchored Lys-63 polyubiquitin chain, promotes autophosphorylation and subsequent activation of MAP3K7. Dephosphorylation at Ser-192 by PPM1B/PP2CB and at Thr-187 by PP2A and PPP6C leads to inactivation. 'Lys-48'-linked polyubiquitination at Lys-72 is induced by TNFalpha, and leads to proteasomal degradation. Undergoes 'Lys-48'-linked polyubiquitination catalyzed by ITCH. Requires 'Lys-63'-linked polyubiquitination for autophosphorylation and subsequent activation. 'Lys-63'-linked ubiquitination does not lead to proteasomal degradation. Deubiquitinated by CYLD, a protease that selectively cleaves 'Lys-63'-linked ubiquitin chains. Deubiquitinated by Y.enterocolitica YopP. Deubiquitinated by USP19; leading to negative regulation of TNF-alpha- and IL-1beta-triggered NF-kappa-B activation. Post-translationally, (Microbial infection) Cleaved and inactivated by the proteases 3C of coxsackievirus A16 and human enterovirus D68, allowing the virus to disrupt TRAF6-triggered NF-kappa-B induction. In terms of processing, (Microbial infection) Acetylation of Thr-184 and Thr-187 by Yersinia YopJ prevents phosphorylation and activation, thus blocking the MAPK signaling pathway. As to expression, isoform 1A is the most abundant in ovary, skeletal muscle, spleen and blood mononuclear cells. Isoform 1B is highly expressed in brain, kidney and small intestine. Isoform 1C is the major form in prostate. Isoform 1D is the less abundant form.

The protein localises to the cytoplasm. Its subcellular location is the cell membrane. The catalysed reaction is L-seryl-[protein] + ATP = O-phospho-L-seryl-[protein] + ADP + H(+). The enzyme catalyses L-threonyl-[protein] + ATP = O-phospho-L-threonyl-[protein] + ADP + H(+). Its activity is regulated as follows. Activated by pro-inflammatory cytokines and in response to physical and chemical stresses, including osmotic stress, oxidative stress, arsenic and ultraviolet light irradiation. Activated by 'Lys-63'-linked polyubiquitination and by autophosphorylation. Association with TAB1/MAP3K7IP1 and TAB2/MAP3K7IP2 promotes activation through autophosphorylation, whereas PPM1B/PP2CB, PP2A and PPP6C dephosphorylation leads to inactivation. Ceramides are also able to activate MAP3K7/TAK1. In terms of biological role, serine/threonine kinase which acts as an essential component of the MAP kinase signal transduction pathway. Plays an important role in the cascades of cellular responses evoked by changes in the environment. Mediates signal transduction of TRAF6, various cytokines including interleukin-1 (IL-1), transforming growth factor-beta (TGFB), TGFB-related factors like BMP2 and BMP4, toll-like receptors (TLR), tumor necrosis factor receptor CD40 and B-cell receptor (BCR). Once activated, acts as an upstream activator of the MKK/JNK signal transduction cascade and the p38 MAPK signal transduction cascade through the phosphorylation and activation of several MAP kinase kinases like MAP2K1/MEK1, MAP2K3/MKK3, MAP2K6/MKK6 and MAP2K7/MKK7. These MAP2Ks in turn activate p38 MAPKs and c-jun N-terminal kinases (JNKs); both p38 MAPK and JNK pathways control the transcription factors activator protein-1 (AP-1). Independently of MAP2Ks and p38 MAPKs, acts as a key activator of NF-kappa-B by promoting activation of the I-kappa-B-kinase (IKK) core complex. Mechanistically, recruited to polyubiquitin chains of RIPK2 and IKBKG/NEMO via TAB2/MAP3K7IP2 and TAB3/MAP3K7IP3, and catalyzes phosphorylation and activation of IKBKB/IKKB component of the IKK complex, leading to NF-kappa-B activation. In osmotic stress signaling, plays a major role in the activation of MAPK8/JNK1, but not that of NF-kappa-B. Promotes TRIM5 capsid-specific restriction activity. Phosphorylates RIPK1 at 'Ser-321' which positively regulates RIPK1 interaction with RIPK3 to promote necroptosis but negatively regulates RIPK1 kinase activity and its interaction with FADD to mediate apoptosis. Phosphorylates STING1 in response to cGAMP-activation, promoting association between STEEP1 and STING1 and STING1 translocation to COPII vesicles. The chain is Mitogen-activated protein kinase kinase kinase 7 from Homo sapiens (Human).